Here is a 266-residue protein sequence, read N- to C-terminus: Translation initiation factor 2 subunit alpha (266 aa).

Positions 10-81 (GELVVGKIDE…SAQQIDLSIK (72 aa)) constitute an S1 motif domain. The interval 233 to 266 (AEDALEESADRAAKVVEQHGGSGQFHRERSEDDE) is disordered. 2 stretches are compositionally biased toward basic and acidic residues: residues 240–249 (SADRAAKVVE) and 257–266 (FHRERSEDDE).

It belongs to the eIF-2-alpha family. In terms of assembly, heterotrimer composed of an alpha, a beta and a gamma chain.

Functionally, eIF-2 functions in the early steps of protein synthesis by forming a ternary complex with GTP and initiator tRNA. This is Translation initiation factor 2 subunit alpha from Haloarcula marismortui (strain ATCC 43049 / DSM 3752 / JCM 8966 / VKM B-1809) (Halobacterium marismortui).